Reading from the N-terminus, the 202-residue chain is ATP synthase subunit b (202 aa).

Residues 9-29 (TTLSLCLAVCVVVIAVGTGWA) form a helical membrane-spanning segment.

It belongs to the ATPase B chain family. F-type ATPases have 2 components, F(1) - the catalytic core - and F(0) - the membrane proton channel. F(1) has five subunits: alpha(3), beta(3), gamma(1), delta(1), epsilon(1). F(0) has three main subunits: a(1), b(2) and c(10-14). The alpha and beta chains form an alternating ring which encloses part of the gamma chain. F(1) is attached to F(0) by a central stalk formed by the gamma and epsilon chains, while a peripheral stalk is formed by the delta and b chains.

It is found in the cell inner membrane. In terms of biological role, f(1)F(0) ATP synthase produces ATP from ADP in the presence of a proton or sodium gradient. F-type ATPases consist of two structural domains, F(1) containing the extramembraneous catalytic core and F(0) containing the membrane proton channel, linked together by a central stalk and a peripheral stalk. During catalysis, ATP synthesis in the catalytic domain of F(1) is coupled via a rotary mechanism of the central stalk subunits to proton translocation. Its function is as follows. Component of the F(0) channel, it forms part of the peripheral stalk, linking F(1) to F(0). The protein is ATP synthase subunit b of Pelobacter propionicus (strain DSM 2379 / NBRC 103807 / OttBd1).